Consider the following 317-residue polypeptide: tRNA uridine(34) hydroxylase (317 aa).

A Rhodanese domain is found at 123–217 (EDDDTIVIDA…YGKDPETKGE (95 aa)). The Cysteine persulfide intermediate role is filled by cysteine 177.

This sequence belongs to the TrhO family.

The catalysed reaction is uridine(34) in tRNA + AH2 + O2 = 5-hydroxyuridine(34) in tRNA + A + H2O. Functionally, catalyzes oxygen-dependent 5-hydroxyuridine (ho5U) modification at position 34 in tRNAs. The sequence is that of tRNA uridine(34) hydroxylase from Staphylococcus carnosus (strain TM300).